The sequence spans 1412 residues: DNA-directed RNA polymerase subunit beta'' (1412 aa).

Positions 220, 294, 301, and 304 each coordinate Zn(2+).

It belongs to the RNA polymerase beta' chain family. RpoC2 subfamily. As to quaternary structure, in plastids the minimal PEP RNA polymerase catalytic core is composed of four subunits: alpha, beta, beta', and beta''. When a (nuclear-encoded) sigma factor is associated with the core the holoenzyme is formed, which can initiate transcription. Zn(2+) serves as cofactor.

The protein localises to the plastid. Its subcellular location is the chloroplast. The enzyme catalyses RNA(n) + a ribonucleoside 5'-triphosphate = RNA(n+1) + diphosphate. In terms of biological role, DNA-dependent RNA polymerase catalyzes the transcription of DNA into RNA using the four ribonucleoside triphosphates as substrates. The protein is DNA-directed RNA polymerase subunit beta'' of Chara vulgaris (Common stonewort).